A 183-amino-acid chain; its full sequence is uncharacterized protein (183 aa).

A run of 4 helical transmembrane segments spans residues L37–F59, A79–V98, W110–L132, and A142–F161.

It localises to the cell membrane. This is an uncharacterized protein from Archaeoglobus fulgidus (strain ATCC 49558 / DSM 4304 / JCM 9628 / NBRC 100126 / VC-16).